The following is a 354-amino-acid chain: UPF0324 membrane protein BL1094 (354 aa).

Transmembrane regions (helical) follow at residues 12-33 (IATV…FASW), 43-65 (FGAL…SAYV), 86-108 (LLRL…TQGI), 112-129 (PIAA…YAIA), 138-160 (LAIL…LAGS), 175-197 (VTMA…IALG), 239-256 (LSRV…AIWW), 271-293 (VAFP…VPFV), 300-321 (LVDF…NVNF), and 331-353 (PMLA…AMLF).

Belongs to the UPF0324 family.

The protein resides in the cell membrane. The chain is UPF0324 membrane protein BL1094 from Bifidobacterium longum (strain NCC 2705).